A 430-amino-acid chain; its full sequence is Gamma-glutamyl phosphate reductase (430 aa).

The protein belongs to the gamma-glutamyl phosphate reductase family.

Its subcellular location is the cytoplasm. The catalysed reaction is L-glutamate 5-semialdehyde + phosphate + NADP(+) = L-glutamyl 5-phosphate + NADPH + H(+). It participates in amino-acid biosynthesis; L-proline biosynthesis; L-glutamate 5-semialdehyde from L-glutamate: step 2/2. Functionally, catalyzes the NADPH-dependent reduction of L-glutamate 5-phosphate into L-glutamate 5-semialdehyde and phosphate. The product spontaneously undergoes cyclization to form 1-pyrroline-5-carboxylate. The chain is Gamma-glutamyl phosphate reductase from Methylococcus capsulatus (strain ATCC 33009 / NCIMB 11132 / Bath).